The sequence spans 478 residues: Growth/differentiation factor 10 (478 aa).

Residues 1–33 (MARGPARTSLGPGSQQLPLLSLLLLLLLRDADG) form the signal peptide. The tract at residues 34-70 (SHTAAARPPPPAAADGLAGDKNPQRSPGDVAAAQSPG) is disordered. A propeptide spanning residues 34–368 (SHTAAARPPP…EKTMQKARKK (335 aa)) is cleaved from the precursor. N-linked (GlcNAc...) asparagine glycosylation is found at N118, N155, and N280. The tract at residues 267–345 (PFQAGDPEPG…GRKDRRKKGQ (79 aa)) is disordered. Positions 291–301 (TQATGPLQNNE) are enriched in polar residues. The span at 331-343 (LKPRPGRKDRRKK) shows a compositional bias: basic residues. Cystine bridges form between C376-C443, C405-C475, and C409-C477. An N-linked (GlcNAc...) asparagine glycan is attached at N469.

Belongs to the TGF-beta family. Homodimer or heterodimer. Can form a non-covalent complex of the mature region and the pro-region.

Its subcellular location is the secreted. In terms of biological role, growth factor involved in osteogenesis and adipogenesis. Plays an inhibitory role in the process of osteoblast differentiation via SMAD2/3 pathway. Plays an inhibitory role in the process of adipogenesis. In Bos taurus (Bovine), this protein is Growth/differentiation factor 10 (GDF10).